The primary structure comprises 491 residues: Aspartyl/glutamyl-tRNA(Asn/Gln) amidotransferase subunit B (491 aa).

Belongs to the GatB/GatE family. GatB subfamily. In terms of assembly, heterotrimer of A, B and C subunits.

The catalysed reaction is L-glutamyl-tRNA(Gln) + L-glutamine + ATP + H2O = L-glutaminyl-tRNA(Gln) + L-glutamate + ADP + phosphate + H(+). The enzyme catalyses L-aspartyl-tRNA(Asn) + L-glutamine + ATP + H2O = L-asparaginyl-tRNA(Asn) + L-glutamate + ADP + phosphate + 2 H(+). Allows the formation of correctly charged Asn-tRNA(Asn) or Gln-tRNA(Gln) through the transamidation of misacylated Asp-tRNA(Asn) or Glu-tRNA(Gln) in organisms which lack either or both of asparaginyl-tRNA or glutaminyl-tRNA synthetases. The reaction takes place in the presence of glutamine and ATP through an activated phospho-Asp-tRNA(Asn) or phospho-Glu-tRNA(Gln). This chain is Aspartyl/glutamyl-tRNA(Asn/Gln) amidotransferase subunit B, found in Parasynechococcus marenigrum (strain WH8102).